Reading from the N-terminus, the 250-residue chain is Putative ankyrin repeat protein RBE_0623 (250 aa).

ANK repeat units lie at residues 70-99 (IGDSLPLVAVKNNNLDMLKMLLSCGFEPNT), 104-134 (NCYTPLWYVTYKGYTNSVRKLLEYPINNINE), and 137-166 (GKETPLKSALIHKHTEIAKLLIDKINPDKF).

The sequence is that of Putative ankyrin repeat protein RBE_0623 from Rickettsia bellii (strain RML369-C).